The primary structure comprises 501 residues: Pentatricopeptide repeat-containing protein At4g16470 (501 aa).

PPR repeat units lie at residues 107–141 (EPET…GFAL), 142–172 (NEYL…LKIR), 173–207 (DLIP…RIVP), 208–242 (DQYT…CIKS), 243–273 (NIIV…LSTR), 274–308 (NVIT…GCRP), 309–344 (NPVT…GIEP), and 345–379 (EGQH…EHPP). Positions 380-455 (VWGSLLGACR…DPGYSQIELQ (76 aa)) are type E motif. Residues 456–486 (GEVHRFMKDDTSHRLSEKIYKKVHEMTSFFM) form a type E(+) motif region.

The protein belongs to the PPR family. PCMP-E subfamily.

The chain is Pentatricopeptide repeat-containing protein At4g16470 (PCMP-E12) from Arabidopsis thaliana (Mouse-ear cress).